The sequence spans 106 residues: Thioredoxin (106 aa).

A Thioredoxin domain is found at 2–106 (VQVISNLDEF…LESLVQKSLA (105 aa)). Catalysis depends on nucleophile residues C30 and C33. A disulfide bridge connects residues C30 and C33.

Belongs to the thioredoxin family.

Functionally, participates in various redox reactions through the reversible oxidation of its active center dithiol to a disulfide and catalyzes dithiol-disulfide exchange reactions. This is Thioredoxin from Coprinus comatus (Shaggy mane).